Here is a 124-residue protein sequence, read N- to C-terminus: Small ribosomal subunit protein uS12 (124 aa).

Aspartate 89 carries the 3-methylthioaspartic acid modification.

Belongs to the universal ribosomal protein uS12 family. In terms of assembly, part of the 30S ribosomal subunit. Contacts proteins S8 and S17. May interact with IF1 in the 30S initiation complex.

With S4 and S5 plays an important role in translational accuracy. Its function is as follows. Interacts with and stabilizes bases of the 16S rRNA that are involved in tRNA selection in the A site and with the mRNA backbone. Located at the interface of the 30S and 50S subunits, it traverses the body of the 30S subunit contacting proteins on the other side and probably holding the rRNA structure together. The combined cluster of proteins S8, S12 and S17 appears to hold together the shoulder and platform of the 30S subunit. The sequence is that of Small ribosomal subunit protein uS12 from Vibrio vulnificus (strain CMCP6).